A 426-amino-acid chain; its full sequence is Serine--tRNA ligase (426 aa).

233–235 (TSE) contributes to the L-serine binding site. 264–266 (RSE) provides a ligand contact to ATP. L-serine is bound at residue Glu-287. An ATP-binding site is contributed by 351–354 (EISS). Ser-387 provides a ligand contact to L-serine.

This sequence belongs to the class-II aminoacyl-tRNA synthetase family. Type-1 seryl-tRNA synthetase subfamily. In terms of assembly, homodimer. The tRNA molecule binds across the dimer.

The protein resides in the cytoplasm. It catalyses the reaction tRNA(Ser) + L-serine + ATP = L-seryl-tRNA(Ser) + AMP + diphosphate + H(+). It carries out the reaction tRNA(Sec) + L-serine + ATP = L-seryl-tRNA(Sec) + AMP + diphosphate + H(+). It participates in aminoacyl-tRNA biosynthesis; selenocysteinyl-tRNA(Sec) biosynthesis; L-seryl-tRNA(Sec) from L-serine and tRNA(Sec): step 1/1. Catalyzes the attachment of serine to tRNA(Ser). Is also able to aminoacylate tRNA(Sec) with serine, to form the misacylated tRNA L-seryl-tRNA(Sec), which will be further converted into selenocysteinyl-tRNA(Sec). The chain is Serine--tRNA ligase from Xylella fastidiosa (strain M12).